The following is a 174-amino-acid chain: 3-hydroxydecanoyl-[acyl-carrier-protein] dehydratase (174 aa).

The active site involves histidine 71.

The protein belongs to the thioester dehydratase family. FabA subfamily. In terms of assembly, homodimer.

The protein resides in the cytoplasm. It catalyses the reaction a (3R)-hydroxyacyl-[ACP] = a (2E)-enoyl-[ACP] + H2O. The catalysed reaction is (3R)-hydroxydecanoyl-[ACP] = (2E)-decenoyl-[ACP] + H2O. The enzyme catalyses (2E)-decenoyl-[ACP] = (3Z)-decenoyl-[ACP]. The protein operates within lipid metabolism; fatty acid biosynthesis. Functionally, necessary for the introduction of cis unsaturation into fatty acids. Catalyzes the dehydration of (3R)-3-hydroxydecanoyl-ACP to E-(2)-decenoyl-ACP and then its isomerization to Z-(3)-decenoyl-ACP. Can catalyze the dehydratase reaction for beta-hydroxyacyl-ACPs with saturated chain lengths up to 16:0, being most active on intermediate chain length. This is 3-hydroxydecanoyl-[acyl-carrier-protein] dehydratase from Nitrobacter hamburgensis (strain DSM 10229 / NCIMB 13809 / X14).